Reading from the N-terminus, the 166-residue chain is NADPH-dependent 7-cyano-7-deazaguanine reductase (166 aa).

Residue cysteine 57 is the Thioimide intermediate of the active site. The active-site Proton donor is the aspartate 64. Residues 79–81 (VES) and 98–99 (HE) each bind substrate.

Belongs to the GTP cyclohydrolase I family. QueF type 1 subfamily.

It is found in the cytoplasm. The catalysed reaction is 7-aminomethyl-7-carbaguanine + 2 NADP(+) = 7-cyano-7-deazaguanine + 2 NADPH + 3 H(+). It participates in tRNA modification; tRNA-queuosine biosynthesis. Its function is as follows. Catalyzes the NADPH-dependent reduction of 7-cyano-7-deazaguanine (preQ0) to 7-aminomethyl-7-deazaguanine (preQ1). The chain is NADPH-dependent 7-cyano-7-deazaguanine reductase from Alkaliphilus metalliredigens (strain QYMF).